A 337-amino-acid chain; its full sequence is Holliday junction branch migration complex subunit RuvB (337 aa).

The tract at residues 1 to 179 (MTHQVSVLHQ…FSFSGRVSYY (179 aa)) is large ATPase domain (RuvB-L). ATP is bound by residues Leu18, Arg19, Gly60, Lys63, Thr64, Ser65, 126 to 128 (EDY), Arg169, Tyr179, and Arg216. A Mg(2+)-binding site is contributed by Thr64. The small ATPAse domain (RuvB-S) stretch occupies residues 180 to 250 (SDEDLATILK…VAEKALSMLL (71 aa)). A head domain (RuvB-H) region spans residues 253 to 337 (DWGLNEIDIK…DNLQILGEEK (85 aa)). Lys308 and Arg313 together coordinate DNA.

The protein belongs to the RuvB family. Homohexamer. Forms an RuvA(8)-RuvB(12)-Holliday junction (HJ) complex. HJ DNA is sandwiched between 2 RuvA tetramers; dsDNA enters through RuvA and exits via RuvB. An RuvB hexamer assembles on each DNA strand where it exits the tetramer. Each RuvB hexamer is contacted by two RuvA subunits (via domain III) on 2 adjacent RuvB subunits; this complex drives branch migration. In the full resolvosome a probable DNA-RuvA(4)-RuvB(12)-RuvC(2) complex forms which resolves the HJ.

It is found in the cytoplasm. It carries out the reaction ATP + H2O = ADP + phosphate + H(+). Functionally, the RuvA-RuvB-RuvC complex processes Holliday junction (HJ) DNA during genetic recombination and DNA repair, while the RuvA-RuvB complex plays an important role in the rescue of blocked DNA replication forks via replication fork reversal (RFR). RuvA specifically binds to HJ cruciform DNA, conferring on it an open structure. The RuvB hexamer acts as an ATP-dependent pump, pulling dsDNA into and through the RuvAB complex. RuvB forms 2 homohexamers on either side of HJ DNA bound by 1 or 2 RuvA tetramers; 4 subunits per hexamer contact DNA at a time. Coordinated motions by a converter formed by DNA-disengaged RuvB subunits stimulates ATP hydrolysis and nucleotide exchange. Immobilization of the converter enables RuvB to convert the ATP-contained energy into a lever motion, pulling 2 nucleotides of DNA out of the RuvA tetramer per ATP hydrolyzed, thus driving DNA branch migration. The RuvB motors rotate together with the DNA substrate, which together with the progressing nucleotide cycle form the mechanistic basis for DNA recombination by continuous HJ branch migration. Branch migration allows RuvC to scan DNA until it finds its consensus sequence, where it cleaves and resolves cruciform DNA. The polypeptide is Holliday junction branch migration complex subunit RuvB (Chlamydia felis (strain Fe/C-56) (Chlamydophila felis)).